The chain runs to 305 residues: Peroxisome biogenesis factor 2 (305 aa).

Residues 1–15 are Peroxisomal matrix-facing; it reads MAAREESTQSANRVL. The chain crosses the membrane as a helical span at residues 16 to 42; it reads RISQLDALELNKALEQLVWSQFTQCFH. Residues 43 to 48 lie on the Cytoplasmic side of the membrane; the sequence is GFKPGL. A helical membrane pass occupies residues 49-74; sequence LARFEPEVKAFLWLFLWRFTIYSKNA. At 75–98 the chain is on the peroxisomal matrix side; that stretch reads TVGQSVLNIQYKNDSSPNPVYQPP. A helical membrane pass occupies residues 99–125; sequence SKNQKLLYAVCTIGGRWLEERCYDLFR. At 126–133 the chain is on the cytoplasmic side; that stretch reads NRHLASFG. The chain crosses the membrane as a helical span at residues 134 to 160; it reads KAKQCMNFVVGLLKLGELMNFLIFLQK. The Peroxisomal matrix portion of the chain corresponds to 161 to 187; that stretch reads GKFATLTERLLGIHSVFCKPQSMREVG. The chain crosses the membrane as a helical span at residues 188–211; the sequence is FEYMNRELLWHGFAEFLVFLLPLI. Residues 212 to 305 are Cytoplasmic-facing; sequence NIQKLKAKLS…GIEMSEVNAL (94 aa). Zn(2+) contacts are provided by C244, C247, C259, H261, C264, C267, C280, and C283. The segment at 244–284 adopts an RING-type zinc-finger fold; the sequence is CALCGEWPTMPHTIGCEHVFCYYCVKSSFLFDMYFTCPKCG.

The protein belongs to the pex2/pex10/pex12 family. In terms of assembly, component of the PEX2-PEX10-PEX12 retrotranslocation channel, composed of PEX2, PEX10 and PEX12. In terms of processing, forms intramolecular and intermolecular disulfide bonds in response to reactive oxygen species (ROS), promoting higher stability.

It localises to the peroxisome membrane. The catalysed reaction is [E2 ubiquitin-conjugating enzyme]-S-ubiquitinyl-L-cysteine + [acceptor protein]-L-cysteine = [E2 ubiquitin-conjugating enzyme]-L-cysteine + [acceptor protein]-S-ubiquitinyl-L-cysteine.. It carries out the reaction S-ubiquitinyl-[E2 ubiquitin-conjugating enzyme]-L-cysteine + [acceptor protein]-L-lysine = [E2 ubiquitin-conjugating enzyme]-L-cysteine + N(6)-ubiquitinyl-[acceptor protein]-L-lysine.. It participates in protein modification; protein ubiquitination. Its function is as follows. E3 ubiquitin-protein ligase component of a retrotranslocation channel required for peroxisome organization by mediating export of the PEX5 receptor from peroxisomes to the cytosol, thereby promoting PEX5 recycling. The retrotranslocation channel is composed of PEX2, PEX10 and PEX12; each subunit contributing transmembrane segments that coassemble into an open channel that specifically allows the passage of PEX5 through the peroxisomal membrane. PEX2 also regulates peroxisome organization by acting as a E3 ubiquitin-protein ligase. PEX2 ubiquitinates PEX5 during its passage through the retrotranslocation channel: catalyzes monoubiquitination of PEX5 at 'Cys-11', a modification that acts as a signal for PEX5 extraction into the cytosol. Required for pexophagy in response to starvation by mediating ubiquitination of peroxisomal proteins, such as PEX5 and ABCD3/PMP70. Also involved in the response to reactive oxygen species (ROS) by mediating 'Lys-48'-linked polyubiquitination and subsequent degradation of PNPLA2/ATGL, thereby regulating lipolysis. In Rattus norvegicus (Rat), this protein is Peroxisome biogenesis factor 2 (Pex2).